Here is a 379-residue protein sequence, read N- to C-terminus: Stimulator of interferon genes protein (379 aa).

The Cytoplasmic segment spans residues 1-17 (MPYSNLHPSIPRPRSYR). The interval 1–190 (MPYSNLHPSI…MFNQLHNNML (190 aa)) is mediates interaction with ZDHHC1 and ZDHHC11. The helical transmembrane segment at 18-34 (FKLAAFVLLVGSLMSLW) threads the bilayer. The Lumenal portion of the chain corresponds to 35–44 (MTGEPPSHTL). A helical membrane pass occupies residues 45 to 69 (HYLALHVASQQLGLLLKKLCCLAEE). The Cytoplasmic segment spans residues 70-91 (LCHVQSRYQGSYWKAVRACVGS). Cys-88 carries S-palmitoyl cysteine lipidation. Residues 92 to 106 (PICFMALILLSFYFY) form a helical membrane-spanning segment. The Lumenal portion of the chain corresponds to 107–116 (CSLENTSDLR). The helical transmembrane segment at 117–134 (LAWHLGILVLSKSLSMTL) threads the bilayer. Residues 135–379 (DLQSLAPAEV…QPLPLRTDLI (245 aa)) are Cytoplasmic-facing. Lys-151 is covalently cross-linked (Glycyl lysine isopeptide (Lys-Gly) (interchain with G-Cter in ubiquitin)). The tract at residues 153-340 (FNVAHGLAWS…RHIRQEEKEE (188 aa)) is cyclic dinucleotide-binding domain (CBD). A 2',3'-cGAMP-binding site is contributed by 162–167 (SYYIGY). Residue Gly-166 participates in 3',3'-c-di-GMP binding. Tyr-167 provides a ligand contact to 2',3'-cUAMP. A Glycyl lysine isopeptide (Lys-Gly) (interchain with G-Cter in ubiquitin) cross-link involves residue Lys-236. Residue Arg-238 participates in 2',3'-cUAMP binding. Residues 238–241 (RAYS) and Thr-263 contribute to the 2',3'-cGAMP site. Residues 238-241 (RAYS) and Thr-263 contribute to the 3',3'-c-di-GMP site. At Ser-241 the chain carries Phosphoserine. Thr-263 lines the 2',3'-cUAMP pocket. A Glycyl lysine isopeptide (Lys-Gly) (interchain with G-Cter in SUMO) cross-link involves residue Lys-338. The segment at 340-379 (EVTMSGPPTSVAPRPSLLSQEPRLLISGMEQPLPLRTDLI) is C-terminal tail (CTT). Ser-355 carries the phosphoserine modification. 2 positions are modified to phosphoserine; by TBK1: Ser-358 and Ser-366. Positions 363–366 (LLIS) match the pLxIS motif motif.

Belongs to the STING family. As to quaternary structure, homodimer; forms a homodimer in absence of cyclic nucleotide (c-di-GMP or cGAMP); 'Lys-63'-linked ubiquitination at Lys-151 is required for homodimerization. Homotetramer; in presence of cyclic nucleotide (c-di-GMP or cGAMP), forms tetramers and higher-order oligomers through side-by-side packing. Interacts (when phosphorylated) with IRF3; following activation and phosphorylation on the pLxIS motif by TBK1, recruits IRF3. Interacts with RIGI, MAVS and SSR2. Interacts with RNF5 and TRIM56. Interacts with TBK1; when homodimer, leading to subsequent production of IFN-beta. Interacts with IFIT1 and IFIT2. Interacts with TRIM29; this interaction induces STING1 ubiquitination and subsequent degradation. Associates with the MHC-II complex. Interacts with STEEP1; interaction takes place upon cGAMP-activation and STING1 phosphorylation by MAP3K7/TAK1 and promotes STING1 translocation to COPII vesicles. Interacts with SEC24A, SEC24B and SEC24C; promoting translocation to COPII vesicles. Interacts (when ubiquitinated) with SQSTM1; leading to relocalization to autophagosomes. Interacts with SURF4. Interacts with HNRNPA2B1. Interacts with ZDHHC1; ZDHHC1 constitutively interacts with STING1 and in presence of DNA viruses activates it by promoting its cGAMP-induced oligomerization and the recruitment of downstream signaling components. Interacts with ZDHHC11; in presence of DNA viruses promotes the recruitment of IRF3 to STING1. Interacts with TOMM70. Interacts with TAB1; promoting recruitment of TAB1 to the endoplasmic reticulum membrane and subsequent activation of MAP3K7/TAK1. Interacts (via transmembrane domain) with TMEM203. Interacts with DDX41. Phosphorylation by TBK1 leads to activation and production of IFN-beta. Following cyclic nucleotide (c-di-GMP or cGAMP)-binding, activation and translocation from the endoplasmic reticulum, STING1 is phosphorylated by TBK1 at Ser-366 in the pLxIS motif. The phosphorylated pLxIS motif constitutes an IRF3-binding motif, leading to recruitment of the transcription factor IRF3 to induce type-I interferons and other cytokines. Phosphorylated on tyrosine residues upon MHC-II aggregation. Dephosphorylation by PPP6C leads to inactivation and decreased production of IFN-beta. Phosphorylation at Ser-358 is also required to activate IRF3. Phosphorylation at Ser-355 by MAP3K7/TAK1 facilitates its interaction with STEEP1, promoting STING1 translocation to COPII vesicles. In terms of processing, ubiquitinated. Ubiquitinated via 'Lys-63'-linked ubiquitin chains in response to double-stranded DNA treatment, leading to relocalization to autophagosomes and subsequent degradation; this process is dependent on SQSTM1. 'Lys-63'-linked ubiquitination mediated by TRIM56 at Lys-151 promotes homodimerization and recruitment of the antiviral kinase TBK1 and subsequent production of IFN-beta. 'Lys-48'-linked polyubiquitination at Lys-151 occurring after viral infection is mediated by RNF5 and leads to proteasomal degradation. 'Lys-11'-linked polyubiquitination at Lys-151 by RNF26 leads to stabilize STING1: it protects STING1 from RNF5-mediated 'Lys-48'-linked polyubiquitination. 'Lys-33'-linked and 'Lys-48'-linked deubiquitinated by USP20; leading to its stabilization and promotion of innate antiviral response. 'Lys-48'-linked deubiquitinated by USP44; leading to its stabilization and promotion of innate antiviral response. Deubiquitinated by USP13; leading to inhibition of innate antiviral response. 'Lys-63'-linked deubiquitinated by USP49; leading to inhibition of the subsequent recruitment of TBK1 to the signaling complex. 'Lys-63'-linked ubiquitination mediated by RNF39 promotes the activation of the cGAS-STING pathway. Post-translationally, sumoylated at Lys-338 by TRIM38 during the early phase of viral infection, promoting its stability by preventing its relocalization to autophagosomes and subsequent degradation. Desumoylated by SENP2 during the late phase of viral infection. Palmitoylation takes place in the Golgi apparatus and creates a platform for the recruitment of TBK1.

It is found in the endoplasmic reticulum membrane. It localises to the cytoplasm. The protein resides in the perinuclear region. The protein localises to the endoplasmic reticulum-Golgi intermediate compartment membrane. Its subcellular location is the golgi apparatus membrane. It is found in the cytoplasmic vesicle. It localises to the autophagosome membrane. The protein resides in the mitochondrion outer membrane. The protein localises to the cell membrane. It catalyses the reaction H(+)(in) = H(+)(out). In contrast to mouse protein, not activated by anticancer molecule 5,6-dimethylxanthenone 4-acetic acid (DMXAA). Functionally, facilitator of innate immune signaling that acts as a sensor of cytosolic DNA from bacteria and viruses and promotes the production of type I interferon (IFN-alpha and IFN-beta). Innate immune response is triggered in response to non-CpG double-stranded DNA from viruses and bacteria delivered to the cytoplasm. Acts by binding cyclic dinucleotides: recognizes and binds cyclic di-GMP (c-di-GMP), a second messenger produced by bacteria, cyclic UMP-AMP (2',3'-cUAMP), and cyclic GMP-AMP (cGAMP), a messenger produced by CGAS in response to DNA virus in the cytosol. Upon binding to c-di-GMP, cUAMP or cGAMP, STING1 oligomerizes, translocates from the endoplasmic reticulum and is phosphorylated by TBK1 on the pLxIS motif, leading to recruitment and subsequent activation of the transcription factor IRF3 to induce expression of type I interferon and exert a potent anti-viral state. Exhibits 2',3' phosphodiester linkage-specific ligand recognition: can bind both 2'-3' linked cGAMP (2'-3'-cGAMP) and 3'-3' linked cGAMP but is preferentially activated by 2'-3' linked cGAMP. The preference for 2'-3'-cGAMP, compared to other linkage isomers is probably due to the ligand itself, whichs adopts an organized free-ligand conformation that resembles the STING1-bound conformation and pays low energy costs in changing into the active conformation. In addition to promote the production of type I interferons, plays a direct role in autophagy. Following cGAMP-binding, STING1 buds from the endoplasmic reticulum into COPII vesicles, which then form the endoplasmic reticulum-Golgi intermediate compartment (ERGIC). The ERGIC serves as the membrane source for WIPI2 recruitment and LC3 lipidation, leading to formation of autophagosomes that target cytosolic DNA or DNA viruses for degradation by the lysosome. Promotes autophagy by acting as a proton channel that directs proton efflux from the Golgi to facilitate MAP1LC3B/LC3B lipidation. The autophagy- and interferon-inducing activities can be uncoupled and autophagy induction is independent of TBK1 phosphorylation. Autophagy is also triggered upon infection by bacteria: following c-di-GMP-binding, which is produced by live Gram-positive bacteria, promotes reticulophagy. May be involved in translocon function, the translocon possibly being able to influence the induction of type I interferons. May be involved in transduction of apoptotic signals via its association with the major histocompatibility complex class II (MHC-II). In Rattus norvegicus (Rat), this protein is Stimulator of interferon genes protein.